Here is a 137-residue protein sequence, read N- to C-terminus: Structural protein A137R (137 aa).

Belongs to the asfivirus A137R family. As to quaternary structure, interacts with host TBK1.

Its subcellular location is the virion. It is found in the host cytoplasm. Its function is as follows. Plays a role in the inhibition of the host innate immune response. Mechanistically, promotes the autophagy-mediated lysosomal degradation of host TBK1 and affects IRF3 nuclear translocation to block type I IFN production. The polypeptide is Structural protein A137R (Ornithodoros (relapsing fever ticks)).